A 490-amino-acid polypeptide reads, in one-letter code: Cytochrome P450 2C50 (490 aa).

The residue at position 127 (S127) is a Phosphoserine. Residues K249 and K375 each carry the N6-acetyllysine modification. Heme is bound at residue C435.

Belongs to the cytochrome P450 family. Requires heme as cofactor. As to expression, expressed in heart and liver.

Its subcellular location is the endoplasmic reticulum membrane. The protein localises to the microsome membrane. It carries out the reaction an organic molecule + reduced [NADPH--hemoprotein reductase] + O2 = an alcohol + oxidized [NADPH--hemoprotein reductase] + H2O + H(+). Metabolizes arachidonic acid to several midchain and omega-terminal hydroxyeicosatetraenoic acids (HETE). The chain is Cytochrome P450 2C50 from Mus musculus (Mouse).